The following is a 517-amino-acid chain: Glycerol kinase 5 (517 aa).

ATP-binding residues include Ser23 and Thr24. Residues Arg93, Asp270, and Gln271 each coordinate glycerol. Positions 292, 335, and 432 each coordinate ATP.

Belongs to the FGGY kinase family.

Its subcellular location is the cytoplasm. The enzyme catalyses glycerol + ATP = sn-glycerol 3-phosphate + ADP + H(+). It participates in polyol metabolism; glycerol degradation via glycerol kinase pathway; sn-glycerol 3-phosphate from glycerol: step 1/1. Its function is as follows. Skin-specific kinase that plays a key role in glycerol metabolism, catalyzing its phosphorylation to produce sn-glycerol 3-phosphate. Involved in skin-specific regulation of sterol regulatory element-binding protein (SREBP) processing and lipid biosynthesis. This is Glycerol kinase 5 (GK5) from Gallus gallus (Chicken).